The sequence spans 367 residues: Heme A synthase (367 aa).

The next 5 membrane-spanning stretches (helical) occupy residues 25–45 (AIRI…LVGG), 111–131 (FLAR…VLTG), 137–157 (LWLP…IGWW), 174–194 (LATH…FMRA), and 211–231 (LAGL…LVAG). Residue His274 participates in heme binding. 3 helical membrane passes run 276-296 (LGAY…LRAA), 305-325 (SVVL…TLLL), and 327-347 (VPLH…GFAI). Heme is bound at residue His335.

It belongs to the COX15/CtaA family. Type 2 subfamily. Interacts with CtaB. It depends on heme b as a cofactor.

It localises to the cell membrane. The catalysed reaction is Fe(II)-heme o + 2 A + H2O = Fe(II)-heme a + 2 AH2. The protein operates within porphyrin-containing compound metabolism; heme A biosynthesis; heme A from heme O: step 1/1. Its function is as follows. Catalyzes the conversion of heme O to heme A by two successive hydroxylations of the methyl group at C8. The first hydroxylation forms heme I, the second hydroxylation results in an unstable dihydroxymethyl group, which spontaneously dehydrates, resulting in the formyl group of heme A. The sequence is that of Heme A synthase from Rhizobium rhizogenes (strain K84 / ATCC BAA-868) (Agrobacterium radiobacter).